The chain runs to 275 residues: Autophagy protein 5 (275 aa).

Met-1 bears the N-acetylmethionine mark. Lys-130 is covalently cross-linked (Glycyl lysine isopeptide (Lys-Gly) (interchain with G-Cter in ATG12)).

It belongs to the ATG5 family. As to quaternary structure, forms a conjugate with ATG12. Part of the minor complex composed of 4 sets of ATG12-ATG5 and ATG16L1 (400 kDa); this complex interacts with ATG3 leading to disruption of ATG7 interaction and promotion of ATG8-like proteins lipidation. Forms an 800-kDa complex composed of ATG12-ATG5 and ATG16L2. The ATG12-ATG5 conjugate interacts with RAB33A; this interaction is bridged by ATG16L1 and promotes ATG12-ATG5-ATG16L1 complex recruitment to phagophores. Interacts with TECPR1; the interaction is direct and does not take place when ATG16L1 is associated with the ATG5-ATG12 conjugate. Interacts with DHX58/RIG-1, IFIH1/MDA5 and MAVS/IPS-1 in monomeric form as well as in ATG12-ATG5 conjugate form. The interaction with MAVS is further enhanced upon vesicular stomatitis virus (VSV) infection. Interacts with ATG3. Interacts with ATG7 and ATG10. Interacts with FADD. Interacts with Bassoon/BSN; this interaction is important for the regulation of presynaptic autophagy. Interacts with ATG16L2. Conjugated to ATG12; which is essential for autophagy, but is not required for association with isolation membrane. In terms of processing, acetylated by EP300.

It is found in the cytoplasm. It localises to the preautophagosomal structure membrane. Involved in autophagic vesicle formation. Conjugation with ATG12, through a ubiquitin-like conjugating system involving ATG7 as an E1-like activating enzyme and ATG10 as an E2-like conjugating enzyme, is essential for its function. The ATG12-ATG5 conjugate acts as an E3-like enzyme which is required for lipidation of ATG8 family proteins and their association to the vesicle membranes. Involved in mitochondrial quality control after oxidative damage, and in subsequent cellular longevity. Plays a critical role in multiple aspects of lymphocyte development and is essential for both B and T lymphocyte survival and proliferation. Required for optimal processing and presentation of antigens for MHC II. Involved in the maintenance of axon morphology and membrane structures, as well as in normal adipocyte differentiation. Promotes primary ciliogenesis through removal of OFD1 from centriolar satellites and degradation of IFT20 via the autophagic pathway. As part of the ATG8 conjugation system with ATG12 and ATG16L1, required for recruitment of LRRK2 to stressed lysosomes and induction of LRRK2 kinase activity in response to lysosomal stress. Its function is as follows. May play an important role in the apoptotic process, possibly within the modified cytoskeleton. Its expression is a relatively late event in the apoptotic process, occurring downstream of caspase activity. Plays a crucial role in IFN-gamma-induced autophagic cell death by interacting with FADD. This is Autophagy protein 5 from Pongo abelii (Sumatran orangutan).